Reading from the N-terminus, the 330-residue chain is tRNA N6-adenosine threonylcarbamoyltransferase (330 aa).

The Fe cation site is built by histidine 110 and histidine 114. Substrate contacts are provided by residues 133 to 137 (LVSGG), aspartate 166, glycine 179, and asparagine 268. Fe cation is bound at residue aspartate 296.

It belongs to the KAE1 / TsaD family. The cofactor is Fe(2+).

It is found in the cytoplasm. It carries out the reaction L-threonylcarbamoyladenylate + adenosine(37) in tRNA = N(6)-L-threonylcarbamoyladenosine(37) in tRNA + AMP + H(+). Its function is as follows. Required for the formation of a threonylcarbamoyl group on adenosine at position 37 (t(6)A37) in tRNAs that read codons beginning with adenine. Is involved in the transfer of the threonylcarbamoyl moiety of threonylcarbamoyl-AMP (TC-AMP) to the N6 group of A37, together with TsaE and TsaB. TsaD likely plays a direct catalytic role in this reaction. This is tRNA N6-adenosine threonylcarbamoyltransferase from Kosmotoga olearia (strain ATCC BAA-1733 / DSM 21960 / TBF 19.5.1).